The following is a 59-amino-acid chain: Putative potassium channel toxin Ts23 (59 aa).

Positions 1–22 (MKAFYGILIIFILISMLDLSQQ) are cleaved as a signal peptide. 3 disulfide bridges follow: cysteine 29/cysteine 50, cysteine 35/cysteine 55, and cysteine 39/cysteine 57.

Belongs to the short scorpion toxin superfamily. Potassium channel inhibitor family. Alpha-KTx 04 subfamily. In terms of tissue distribution, expressed by the venom gland.

The protein localises to the secreted. In terms of biological role, potently blocks Kv1.1/KCNA1 (85%), Kv1.2/KCNA2 (91%), Kv1.3/KCNA3 (89%), Kv1.6/KCNA6 (94%), and Shaker (97%). The polypeptide is Putative potassium channel toxin Ts23 (Tityus serrulatus (Brazilian scorpion)).